A 375-amino-acid polypeptide reads, in one-letter code: Alanine racemase (375 aa).

Residue Lys38 is the Proton acceptor; specific for D-alanine of the active site. The residue at position 38 (Lys38) is an N6-(pyridoxal phosphate)lysine. Arg137 is a binding site for substrate. Catalysis depends on Tyr266, which acts as the Proton acceptor; specific for L-alanine. Met314 is a binding site for substrate.

The protein belongs to the alanine racemase family. Requires pyridoxal 5'-phosphate as cofactor.

It catalyses the reaction L-alanine = D-alanine. Its pathway is amino-acid biosynthesis; D-alanine biosynthesis; D-alanine from L-alanine: step 1/1. Its function is as follows. Catalyzes the interconversion of L-alanine and D-alanine. May also act on other amino acids. In Cutibacterium acnes (strain DSM 16379 / KPA171202) (Propionibacterium acnes), this protein is Alanine racemase (alr).